A 382-amino-acid chain; its full sequence is Alkanesulfonate monooxygenase (382 aa).

This sequence belongs to the SsuD family. As to quaternary structure, homotetramer.

The enzyme catalyses an alkanesulfonate + FMNH2 + O2 = an aldehyde + FMN + sulfite + H2O + 2 H(+). In terms of biological role, catalyzes the desulfonation of aliphatic sulfonates. The chain is Alkanesulfonate monooxygenase from Serratia proteamaculans (strain 568).